Reading from the N-terminus, the 258-residue chain is Granzyme K (258 aa).

Positions 1–23 are cleaved as a signal peptide; that stretch reads MSFSSSALVFLVAGIYMSSESFH. A propeptide spans 24–25 (activation peptide); it reads TE. Positions 26–253 constitute a Peptidase S1 domain; sequence IIGGREVQPH…YQTWIKSKLA (228 aa). Cys-51 and Cys-67 are disulfide-bonded. Residues His-66 and Asp-110 each act as charge relay system in the active site. 3 disulfide bridges follow: Cys-143–Cys-214, Cys-175–Cys-193, and Cys-204–Cys-228. The active-site Charge relay system is the Ser-208.

This sequence belongs to the peptidase S1 family. Granzyme subfamily. As to expression, speen, lungs and liver non-parenchymal cells.

It localises to the cytoplasmic granule. This is Granzyme K (Gzmk) from Rattus norvegicus (Rat).